Here is a 1108-residue protein sequence, read N- to C-terminus: Receptor-type guanylate cyclase gcy-20 (1108 aa).

Positions 1-15 (MRILLLLLQNILVFC) are cleaved as a signal peptide. Residues 16-474 (QFLQTIKVGL…ECPADFVKEY (459 aa)) are Extracellular-facing. Residues asparagine 66, asparagine 131, asparagine 319, asparagine 341, asparagine 366, and asparagine 380 are each glycosylated (N-linked (GlcNAc...) asparagine). A helical transmembrane segment spans residues 475 to 495 (LVYTIIAAFIVILALLAGCAG). A Protein kinase domain is found at 483–803 (FIVILALLAG…IEQVRSHLNG (321 aa)). ATP-binding positions include 489–497 (LLAGCAGLL) and lysine 571. At 496 to 1108 (LLYTMHMKRK…QAGDNNSETV (613 aa)) the chain is on the cytoplasmic side. A Guanylate cyclase domain is found at 876-1006 (TIFFSDVVQF…DAVNTASRME (131 aa)). Residues 1083 to 1108 (LEKNAEGSETSSLSVDQAGDNNSETV) are disordered. The span at 1089–1108 (GSETSSLSVDQAGDNNSETV) shows a compositional bias: polar residues.

This sequence belongs to the adenylyl cyclase class-4/guanylyl cyclase family. Expressed asymmetrically in ASE left (ASEL) sensory neuron. Expressed in excretory gland and canal cell.

Its subcellular location is the cell membrane. The catalysed reaction is GTP = 3',5'-cyclic GMP + diphosphate. Guanylate cyclase involved in the production of the second messenger cGMP. The protein is Receptor-type guanylate cyclase gcy-20 of Caenorhabditis elegans.